The chain runs to 1192 residues: Protein pangolin, isoform J (1192 aa).

A Nuclear localization signal motif is present at residues 351–357 (LGLPSEE). The segment at 691 to 713 (AKHTSNAQSNESKETTNDKKKPH) is disordered. The segment at residues 714 to 782 (IKKPLNAFML…LHMELYPGWS (69 aa)) is a DNA-binding region (HMG box). 4 disordered regions span residues 790–812 (VSKKKKRKKDRSTTDSGGNNMKK), 847–916 (PAED…SPST), 955–986 (QRPTLVSTSGSSSGSTSSISTTPNTSSTVSPV), and 1136–1192 (QLNN…ISVS). Residues 862–871 (SDDDEDDYDD) are compositionally biased toward acidic residues. Low complexity-rich tracts occupy residues 898-915 (SMPSPGCLSGLSSLQSPS) and 957-986 (PTLVSTSGSSSGSTSSISTTPNTSSTVSPV). Composition is skewed to polar residues over residues 1140–1162 (RTENPNRSEQTMLSVSNHSVNSS) and 1170–1192 (SQAIVSSNPPNAGSSDNGVISVS).

Belongs to the TCF/LEF family. As to quaternary structure, binds to the beta-catenin homolog arm or to gro.

The protein localises to the nucleus. In terms of biological role, segment polarity protein. Functions together with arm to transduce the Wingless (Wg) signal in embryos and in developing adult tissues. Acts as a transcriptional activator, but in the absence of arm, it binds to gro and acts as a transcriptional repressor of wg-responsive genes. The polypeptide is Protein pangolin, isoform J (Drosophila melanogaster (Fruit fly)).